We begin with the raw amino-acid sequence, 157 residues long: 6,7-dimethyl-8-ribityllumazine synthase 1 (157 aa).

Residues F22, 53–55 (ALE), and 82–84 (TVI) each bind 5-amino-6-(D-ribitylamino)uracil. Residue 87-88 (ET) participates in (2S)-2-hydroxy-3-oxobutyl phosphate binding. The active-site Proton donor is H90. N115 provides a ligand contact to 5-amino-6-(D-ribitylamino)uracil. R129 is a (2S)-2-hydroxy-3-oxobutyl phosphate binding site.

Belongs to the DMRL synthase family.

It catalyses the reaction (2S)-2-hydroxy-3-oxobutyl phosphate + 5-amino-6-(D-ribitylamino)uracil = 6,7-dimethyl-8-(1-D-ribityl)lumazine + phosphate + 2 H2O + H(+). The protein operates within cofactor biosynthesis; riboflavin biosynthesis; riboflavin from 2-hydroxy-3-oxobutyl phosphate and 5-amino-6-(D-ribitylamino)uracil: step 1/2. Its function is as follows. Catalyzes the formation of 6,7-dimethyl-8-ribityllumazine by condensation of 5-amino-6-(D-ribitylamino)uracil with 3,4-dihydroxy-2-butanone 4-phosphate. This is the penultimate step in the biosynthesis of riboflavin. The polypeptide is 6,7-dimethyl-8-ribityllumazine synthase 1 (Brucella suis biovar 1 (strain 1330)).